A 471-amino-acid polypeptide reads, in one-letter code: UDP-glycosyltransferase 71A15 (471 aa).

UDP-alpha-D-glucose contacts are provided by residues serine 282, 348–349 (WA), 366–374 (HCGWNSTLE), and 388–391 (YAEQ).

The protein belongs to the UDP-glycosyltransferase family.

Glycosyltransferase that possesses chalcone and flavonol 2'-O-glycosyltransferase activity. Converts phloretin to phlorizin (phloretin 2'-O-glucoside), a potent antioxidant. Possesses glycosyltransferase activity toward, naringenin, naringenin chalcone, eriodictyol, eriodictyol chalcone, apigenin, luteolin, kaempferol, quercetin, isoliquiritigenin, butein and caffeic acid. Can convert phloretin to phloretin 4'-O-glucoside and phloretin 4-O-glucoside. This Malus domestica (Apple) protein is UDP-glycosyltransferase 71A15.